Here is a 509-residue protein sequence, read N- to C-terminus: ATP synthase subunit alpha (509 aa).

Position 169–176 (169–176 (GDRQTGKT)) interacts with ATP.

Belongs to the ATPase alpha/beta chains family. In terms of assembly, F-type ATPases have 2 components, CF(1) - the catalytic core - and CF(0) - the membrane proton channel. CF(1) has five subunits: alpha(3), beta(3), gamma(1), delta(1), epsilon(1). CF(0) has three main subunits: a(1), b(2) and c(9-12). The alpha and beta chains form an alternating ring which encloses part of the gamma chain. CF(1) is attached to CF(0) by a central stalk formed by the gamma and epsilon chains, while a peripheral stalk is formed by the delta and b chains.

The protein resides in the cell inner membrane. The enzyme catalyses ATP + H2O + 4 H(+)(in) = ADP + phosphate + 5 H(+)(out). In terms of biological role, produces ATP from ADP in the presence of a proton gradient across the membrane. The alpha chain is a regulatory subunit. The sequence is that of ATP synthase subunit alpha from Zymomonas mobilis subsp. mobilis (strain ATCC 31821 / ZM4 / CP4).